The following is a 172-amino-acid chain: ATP synthase subunit b (172 aa).

A helical transmembrane segment spans residues 27-47 (LAIVIFGLYKFLPPFVGGILE).

The protein belongs to the ATPase B chain family. As to quaternary structure, F-type ATPases have 2 components, F(1) - the catalytic core - and F(0) - the membrane proton channel. F(1) has five subunits: alpha(3), beta(3), gamma(1), delta(1), epsilon(1). F(0) has four main subunits: a(1), b(1), b'(1) and c(10-14). The alpha and beta chains form an alternating ring which encloses part of the gamma chain. F(1) is attached to F(0) by a central stalk formed by the gamma and epsilon chains, while a peripheral stalk is formed by the delta, b and b' chains.

Its subcellular location is the cellular thylakoid membrane. Functionally, f(1)F(0) ATP synthase produces ATP from ADP in the presence of a proton or sodium gradient. F-type ATPases consist of two structural domains, F(1) containing the extramembraneous catalytic core and F(0) containing the membrane proton channel, linked together by a central stalk and a peripheral stalk. During catalysis, ATP synthesis in the catalytic domain of F(1) is coupled via a rotary mechanism of the central stalk subunits to proton translocation. In terms of biological role, component of the F(0) channel, it forms part of the peripheral stalk, linking F(1) to F(0). This Prochlorococcus marinus (strain MIT 9303) protein is ATP synthase subunit b.